We begin with the raw amino-acid sequence, 165 residues long: ATP synthase subunit b (165 aa).

The chain crosses the membrane as a helical span at residues Leu10–Phe30.

It belongs to the ATPase B chain family. F-type ATPases have 2 components, F(1) - the catalytic core - and F(0) - the membrane proton channel. F(1) has five subunits: alpha(3), beta(3), gamma(1), delta(1), epsilon(1). F(0) has three main subunits: a(1), b(2) and c(10-14). The alpha and beta chains form an alternating ring which encloses part of the gamma chain. F(1) is attached to F(0) by a central stalk formed by the gamma and epsilon chains, while a peripheral stalk is formed by the delta and b chains.

The protein localises to the cell inner membrane. Functionally, f(1)F(0) ATP synthase produces ATP from ADP in the presence of a proton or sodium gradient. F-type ATPases consist of two structural domains, F(1) containing the extramembraneous catalytic core and F(0) containing the membrane proton channel, linked together by a central stalk and a peripheral stalk. During catalysis, ATP synthesis in the catalytic domain of F(1) is coupled via a rotary mechanism of the central stalk subunits to proton translocation. Component of the F(0) channel, it forms part of the peripheral stalk, linking F(1) to F(0). In Bacteroides fragilis (strain ATCC 25285 / DSM 2151 / CCUG 4856 / JCM 11019 / LMG 10263 / NCTC 9343 / Onslow / VPI 2553 / EN-2), this protein is ATP synthase subunit b.